The sequence spans 308 residues: Tetraacyldisaccharide 4'-kinase (308 aa).

63–70 provides a ligand contact to ATP; it reads SFGGNGKT.

It belongs to the LpxK family.

It catalyses the reaction a lipid A disaccharide + ATP = a lipid IVA + ADP + H(+). It functions in the pathway glycolipid biosynthesis; lipid IV(A) biosynthesis; lipid IV(A) from (3R)-3-hydroxytetradecanoyl-[acyl-carrier-protein] and UDP-N-acetyl-alpha-D-glucosamine: step 6/6. Transfers the gamma-phosphate of ATP to the 4'-position of a tetraacyldisaccharide 1-phosphate intermediate (termed DS-1-P) to form tetraacyldisaccharide 1,4'-bis-phosphate (lipid IVA). The chain is Tetraacyldisaccharide 4'-kinase from Campylobacter jejuni subsp. jejuni serotype O:6 (strain 81116 / NCTC 11828).